The primary structure comprises 132 residues: Small ribosomal subunit protein uS8 (132 aa).

This sequence belongs to the universal ribosomal protein uS8 family. Part of the 30S ribosomal subunit. Contacts proteins S5 and S12.

Its function is as follows. One of the primary rRNA binding proteins, it binds directly to 16S rRNA central domain where it helps coordinate assembly of the platform of the 30S subunit. The protein is Small ribosomal subunit protein uS8 of Bacillus pumilus (strain SAFR-032).